A 305-amino-acid chain; its full sequence is Protein ORANGE, chloroplastic (305 aa).

The N-terminal 54 residues, 1 to 54 (MSCLGRILSVSYPPDPYGSRLSVSKLSSPGRNRRLRWRFTALDSDSSSLDSDSS), are a transit peptide targeting the chloroplast. Helical transmembrane passes span 144–164 (VYYA…GLLA) and 197–217 (IVAS…VVEV). Positions 206-297 (VGVISALMVV…CTGMAMASEH (92 aa)) are CR-type-like. The stretch at 228-235 (CKYCLGTG) is one CXXCXGXG motif repeat. A CXXCXXXG motif repeat occupies 239–246 (CARCSSTG). The stretch at 272–279 (CSNCSGAG) is one CXXCXGXG motif repeat. The stretch at 283 to 290 (CPTCLCTG) is one CXXCXXXG motif repeat.

The protein belongs to the orange-like family. As to quaternary structure, interacts with ERF1-2. As to expression, expressed in young leaves, curds and flower buds.

It is found in the plastid. It localises to the chloroplast membrane. Its subcellular location is the nucleus. Its function is as follows. Involved in chromoplast differentiation. Is associated with a cellular process that triggers the differentiation of pro-plastids or other non-colored plastids into chromoplasts for carotenoid accumulation. Associated with carotenoid accumulation in de-etiolated cotyledons. Controls leaf petiole elongation by suppressing the expression of ERF1 genes. This is Protein ORANGE, chloroplastic from Brassica oleracea var. botrytis (Cauliflower).